A 598-amino-acid chain; its full sequence is Arylsulfatase J (598 aa).

Residues 1–47 (MAPRDSAEPLPPLSPQAWAWSGKFLAMGALAGFSVLSLLTYGYLCWG) form the signal peptide. Residues aspartate 82, aspartate 83, and cysteine 120 each contribute to the Ca(2+) site. Residue cysteine 120 is the Nucleophile of the active site. The residue at position 120 (cysteine 120) is a 3-oxoalanine (Cys). The N-linked (GlcNAc...) asparagine glycan is linked to asparagine 155. Residue lysine 174 participates in substrate binding. Histidine 176 is a catalytic residue. Substrate is bound at residue histidine 267. Residues asparagine 304 and asparagine 316 are each glycosylated (N-linked (GlcNAc...) asparagine). Ca(2+)-binding residues include aspartate 325 and asparagine 326. Position 343 (lysine 343) interacts with substrate. Asparagine 429, asparagine 495, asparagine 525, and asparagine 563 each carry an N-linked (GlcNAc...) asparagine glycan. The tract at residues 532–598 (RYPPKDPRSN…IKCHPSVATG (67 aa)) is disordered. Over residues 559–583 (KKKSNKTKAKKMQKKKSKARMRKQL) the composition is skewed to basic residues.

The protein belongs to the sulfatase family. Ca(2+) serves as cofactor. In terms of processing, the conversion to 3-oxoalanine (also known as C-formylglycine, FGly), of a serine or cysteine residue in prokaryotes and of a cysteine residue in eukaryotes, is critical for catalytic activity.

The protein resides in the secreted. This is Arylsulfatase J (Arsj) from Mus musculus (Mouse).